A 184-amino-acid chain; its full sequence is UPF0397 protein SAR2767 (184 aa).

The next 5 membrane-spanning stretches (helical) occupy residues 11-31 (VVAIGIGAAVFVILGRFVVIP), 44-64 (AFLALISAIFGPFAGLMTGLI), 77-97 (AWWSWVICSGIIGCLYGWIGL), 117-137 (GQIIANIICWALIAPTLDILI), and 148-168 (QGVISAVLNIISVGIIGTILL).

The protein belongs to the UPF0397 family.

The protein resides in the cell membrane. This chain is UPF0397 protein SAR2767, found in Staphylococcus aureus (strain MRSA252).